Here is a 1866-residue protein sequence, read N- to C-terminus: Protein strawberry notch homolog (1866 aa).

Over residues 19-28 (QQSSPTPSTS) the composition is skewed to low complexity. 5 disordered regions span residues 19–63 (QQSS…HSSS), 132–151 (TAPT…IVPK), 156–253 (LFET…GLPI), 561–581 (GMAS…QKAK), and 1112–1308 (GLSG…ARGS). Composition is skewed to polar residues over residues 37–63 (QSFS…HSSS) and 134–146 (PTVN…TPTV). Residues 161-176 (TADSPTPSGDTSTTAS) show a composition bias toward low complexity. Composition is skewed to polar residues over residues 191–203 (DRQN…TARS) and 210–228 (TPST…LTQR). Over residues 229–239 (SHTSSPASSAS) the composition is skewed to low complexity. Residues 566 to 577 (RLQTTPQPLTKS) show a composition bias toward polar residues. Over residues 1112-1126 (GLSGIGRSSMSSSTG) the composition is skewed to low complexity. Acidic residues predominate over residues 1142-1152 (DGSDDEVENDM). Positions 1164-1177 (ESAREEAEGARTLE) are enriched in basic and acidic residues. The segment covering 1194-1213 (SSSDDSDEEVVKDEDEDEEA) has biased composition (acidic residues). Basic and acidic residues-rich tracts occupy residues 1262-1281 (RDEE…EERR) and 1290-1304 (RRAE…EELQ).

The protein belongs to the SBNO family. As to expression, expressed in the somatic gonad, neurons, hypodermal cells, seam cells, the excretory system, and intestinal cells (at protein level).

The protein localises to the nucleus. Its function is as follows. Transcriptional activator that functions upstream of the let-60/Ras and let-23/EGFR signaling pathways to positively regulate lin-3 expression and thereby promote vulval induction. Plays a role in excretory duct development. Plays a role in male tail development. This is Protein strawberry notch homolog from Caenorhabditis elegans.